The sequence spans 112 residues: MSNIYDLANELNRTFRELPEYKAVLESKAAIDADSEAKSLFDDYIAFQGKIQQLMQTGQMPTPELQEEMKSFGEKIQANAIVTEFFTKQQQLSVYLSDIERIVFEPIQDLMK.

It belongs to the UPF0342 family.

The chain is UPF0342 protein SGO_1370 from Streptococcus gordonii (strain Challis / ATCC 35105 / BCRC 15272 / CH1 / DL1 / V288).